We begin with the raw amino-acid sequence, 98 residues long: NADH-ubiquinone oxidoreductase chain 4L (98 aa).

3 helical membrane-spanning segments follow: residues 1–21 (MTMV…GLLM), 29–49 (SLLC…VTIL), and 61–81 (IVLL…LVMV).

Belongs to the complex I subunit 4L family. As to quaternary structure, core subunit of respiratory chain NADH dehydrogenase (Complex I) which is composed of 45 different subunits.

Its subcellular location is the mitochondrion inner membrane. The catalysed reaction is a ubiquinone + NADH + 5 H(+)(in) = a ubiquinol + NAD(+) + 4 H(+)(out). Functionally, core subunit of the mitochondrial membrane respiratory chain NADH dehydrogenase (Complex I) which catalyzes electron transfer from NADH through the respiratory chain, using ubiquinone as an electron acceptor. Part of the enzyme membrane arm which is embedded in the lipid bilayer and involved in proton translocation. This Monachus monachus (Mediterranean monk seal) protein is NADH-ubiquinone oxidoreductase chain 4L (MT-ND4L).